Consider the following 419-residue polypeptide: Tyrosine--tRNA ligase (419 aa).

Tyr34 contributes to the L-tyrosine binding site. A 'HIGH' region motif is present at residues 39–48 (PSGDSMHIGH). Residues Tyr168 and Gln172 each contribute to the L-tyrosine site. The 'KMSKS' region signature appears at 230–234 (KFGKS). ATP is bound at residue Lys233. Positions 352–418 (ANLVDWLVTL…GKKKYFLVSY (67 aa)) constitute an S4 RNA-binding domain.

This sequence belongs to the class-I aminoacyl-tRNA synthetase family. TyrS type 1 subfamily. Homodimer.

It localises to the cytoplasm. The catalysed reaction is tRNA(Tyr) + L-tyrosine + ATP = L-tyrosyl-tRNA(Tyr) + AMP + diphosphate + H(+). Functionally, catalyzes the attachment of tyrosine to tRNA(Tyr) in a two-step reaction: tyrosine is first activated by ATP to form Tyr-AMP and then transferred to the acceptor end of tRNA(Tyr). In Listeria monocytogenes serovar 1/2a (strain ATCC BAA-679 / EGD-e), this protein is Tyrosine--tRNA ligase.